Consider the following 391-residue polypeptide: Phosphoprotein (391 aa).

The tract at residues 1–194 (MDQFIKQDET…GSLSGATLYA (194 aa)) is N-terminus domain. Residues T10, T16, T91, T150, and T165 each carry the phosphothreonine modification. The residue at position 188 (S188) is a Phosphoserine. Residues 216–279 (ISANEIMDLL…MATVKIMDPG (64 aa)) form a multimerization region. Residues 218-245 (ANEIMDLLRGMDARLQHLEQKVDKVLAQ) are a coiled coil. Residue T250 is modified to Phosphothreonine. At S257 the chain carries Phosphoserine. Phosphothreonine occurs at positions 258 and 282. S292 and S294 each carry phosphoserine. The residue at position 298 (T298) is a Phosphothreonine. 2 positions are modified to phosphoserine: S301 and S374. The tract at residues 343 to 391 (AGQKVMITKMITDCVANPQMKQAFEQRLAKASTEDALNDIKRDIIRSAI) is interaction with the nucleoprotein. T375 carries the post-translational modification Phosphothreonine.

Belongs to the rubulavirus/avulavirus P protein family. As to quaternary structure, homotetramer. Interacts (via multimerization domain) with polymerase L; this interaction forms the polymerase L-P complex. Interacts (via N-terminus) with N0 (via Ncore); this interaction allows P to chaperon N0 to avoid N polymerization before encapsidation. Interacts (via C-terminus) with N-RNA template; this interaction positions the polymerase on the template for both transcription and replication. Interacts with host RPS6KB1 kinase; this interaction may play a role in the viral replication and transcription.

The protein resides in the virion. Its function is as follows. Essential cofactor of the RNA polymerase L that plays a central role in the transcription and replication by forming the polymerase complex with RNA polymerase L and recruiting L to the genomic N-RNA template for RNA synthesis. Also plays a central role in the encapsidation of nascent RNA chains by forming the encapsidation complex with the nucleocapsid protein N (N-P complex). Acts as a chaperone for newly synthesized free N protein, so-called N0, allowing encapsidation of nascent RNA chains during replication. The nucleoprotein protein N prevents excessive phosphorylation of P, which leads to down-regulation of viral transcription/ replication. Participates, together with N, in the formation of viral factories (viroplasms), which are large inclusions in the host cytoplasm where replication takes place. This is Phosphoprotein from Homo sapiens (Human).